A 236-amino-acid polypeptide reads, in one-letter code: Purine nucleoside phosphorylase DeoD-type 2 (236 aa).

H5 contributes to the a purine D-ribonucleoside binding site. Phosphate contacts are provided by residues G21, R25, R44, and 88 to 91 (RVGT). A purine D-ribonucleoside-binding positions include 180-182 (EME) and 204-205 (SD). The active-site Proton donor is D205.

The protein belongs to the PNP/UDP phosphorylase family. Homohexamer; trimer of homodimers.

It catalyses the reaction a purine D-ribonucleoside + phosphate = a purine nucleobase + alpha-D-ribose 1-phosphate. It carries out the reaction a purine 2'-deoxy-D-ribonucleoside + phosphate = a purine nucleobase + 2-deoxy-alpha-D-ribose 1-phosphate. Functionally, catalyzes the reversible phosphorolytic breakdown of the N-glycosidic bond in the beta-(deoxy)ribonucleoside molecules, with the formation of the corresponding free purine bases and pentose-1-phosphate. This chain is Purine nucleoside phosphorylase DeoD-type 2, found in Shewanella oneidensis (strain ATCC 700550 / JCM 31522 / CIP 106686 / LMG 19005 / NCIMB 14063 / MR-1).